The sequence spans 95 residues: Small ribosomal subunit protein bS20 (95 aa).

It belongs to the bacterial ribosomal protein bS20 family.

Its function is as follows. Binds directly to 16S ribosomal RNA. The sequence is that of Small ribosomal subunit protein bS20 from Ehrlichia canis (strain Jake).